A 200-amino-acid polypeptide reads, in one-letter code: ASI1-immunoprecipitated protein 1 (200 aa).

Residues 18 to 101 (RTVYVDELTP…RPVRACAAEP (84 aa)) form the RRM domain.

As to quaternary structure, component of the ASI1-AIPP1-EDM2 (AAE) RNA regulatory complex composed of at least AIPP1/EDM3, ASI1 and EDM2 and may contain CPL2, AIPP2 and AIPP3/BDT1. Binds directly to ASI1 and EDM2 and may function as a bridge protein between them. Co-associates with EDM2 to histone H3 lysine 9 dimethylation (H3K9me2)-marked chromatin and transcripts at a critical proximal polyadenylation site of RPP7 to hamper proximal transcript polyadeylation/termination.

The protein localises to the nucleus. In terms of biological role, prevents gene silencing by suppressing CHG methylation as well as histone H3 lysine 9 dimethylation (H3K9me2) status at target loci. Collaboratively with ASI1 and EDM2, the AAE complex regulates alternative RNA processing (e.g. alternative splicing) and epigenetic silencing (e.g. H3K9me2) of intronic heterochromatin-containing genes as well as genic heterochromatin-containing genes by promoting distal 3' polyadenylation, thus being required for the accumulation of their full-length transcripts. May also modulate transposable elements (TE) expression. Mediates RPP7-dependent race-specific disease resistance by promoting histone H3 lysine 9 dimethylation (H3K9me2) at the proximal RPP7 polyadenylation site, thus controlling alternative polyadenylation of RPP7 immune receptor transcripts and facilitating 2-phosphoserine RNAPII occupancy. In cv. Columbia, required for RPP7-dependent disease resistance against the Hyaloperonospora arabidopsidis isolate Hiks1. This Arabidopsis thaliana (Mouse-ear cress) protein is ASI1-immunoprecipitated protein 1.